A 2144-amino-acid chain; its full sequence is Polyketide synthase-like protein Preu9 (2144 aa).

The 250-residue stretch at 1-250 folds into the Ketosynthase family 3 (KS3) domain; it reads MYALHLAVNA…GANAHCIIDH (250 aa). Positions 276-325 are disordered; the sequence is QNGHLNEFAANGTTNAPSRDHRNGITDGRADGNTNGHPNANGDVGGNPIN. Basic and acidic residues predominate over residues 293–305; it reads SRDHRNGITDGRA. The tract at residues 435–738 is malonyl-CoA:ACP transacylase (MAT); sequence FVFTGQGAQW…KSPVEQILKS (304 aa). An N-terminal hotdog fold region spans residues 827–965; the sequence is HDLLGSKVVG…GCVKLIIKSS (139 aa). The tract at residues 827 to 1137 is dehydratase (DH) domain; it reads HDLLGSKVVG…ERLRCVSYSR (311 aa). In terms of domain architecture, PKS/mFAS DH spans 827–1141; that stretch reads HDLLGSKVVG…CVSYSRISSD (315 aa). Histidine 859 functions as the Proton acceptor; for dehydratase activity in the catalytic mechanism. The tract at residues 979 to 1141 is C-terminal hotdog fold; it reads TLRPVDVRAW…CVSYSRISSD (163 aa). Aspartate 1050 acts as the Proton donor; for dehydratase activity in catalysis. Positions 1305–1494 are methyltransferase (MT) domain; sequence TGIYPQLHRI…GLDVVLDDFP (190 aa). Residues 1731–2042 are enoyl reductase (ER) domain; it reads GVPNSLCFAS…LANMIGKLVV (312 aa).

In terms of biological role, polyketide synthase-like protein that lacks important domains such as carrier domain and does probably not function as a polyketide synthase. In Preussia isomera (Coprophilous fungus), this protein is Polyketide synthase-like protein Preu9.